The chain runs to 117 residues: Large ribosomal subunit protein bL19 (117 aa).

This sequence belongs to the bacterial ribosomal protein bL19 family.

Its function is as follows. This protein is located at the 30S-50S ribosomal subunit interface and may play a role in the structure and function of the aminoacyl-tRNA binding site. This chain is Large ribosomal subunit protein bL19, found in Exiguobacterium sp. (strain ATCC BAA-1283 / AT1b).